Reading from the N-terminus, the 329-residue chain is DNA-directed RNA polymerase subunit alpha (329 aa).

The tract at residues 1-234 is alpha N-terminal domain (alpha-NTD); it reads MQSAVNEFLT…QQLAVFVDLE (234 aa). The interval 248–329 is alpha C-terminal domain (alpha-CTD); that stretch reads IDPVLLRPVD…WPPASLKNND (82 aa).

It belongs to the RNA polymerase alpha chain family. As to quaternary structure, homodimer. The RNAP catalytic core consists of 2 alpha, 1 beta, 1 beta' and 1 omega subunit. When a sigma factor is associated with the core the holoenzyme is formed, which can initiate transcription.

It catalyses the reaction RNA(n) + a ribonucleoside 5'-triphosphate = RNA(n+1) + diphosphate. Functionally, DNA-dependent RNA polymerase catalyzes the transcription of DNA into RNA using the four ribonucleoside triphosphates as substrates. This Saccharophagus degradans (strain 2-40 / ATCC 43961 / DSM 17024) protein is DNA-directed RNA polymerase subunit alpha.